The chain runs to 584 residues: Sodium/calcium exchanger NCL1 (584 aa).

Helical transmembrane passes span 77-97 (FLPC…YGFL), 120-140 (LVGG…LVLV), 154-174 (VLIG…LLWG), 215-235 (AARI…PKML), and 245-265 (VLLA…YQVF). EF-hand domains are found at residues 305-340 (PNED…INFE) and 345-380 (DKND…WLNE). The Ca(2+) site is built by Asp-318, Asp-320, Ser-322, Thr-324, Glu-329, Asp-358, Ser-360, Asn-362, and Glu-369. Transmembrane regions (helical) follow at residues 426–446 (WCIT…AAFA), 466–486 (FISF…SAII), 504–524 (YGGV…LIYI), 531–551 (FSSE…FTSF), and 561–581 (LVAY…DFVF).

The protein belongs to the Ca(2+):cation antiporter (CaCA) (TC 2.A.19) family.

The protein localises to the cell membrane. Its function is as follows. May function as a sodium/calcium exchanger (NCX) and participate in the maintenance of calcium homeostasis. May play a role abiotic stress responses. The protein is Sodium/calcium exchanger NCL1 of Oryza sativa subsp. japonica (Rice).